Consider the following 674-residue polypeptide: ATP-citrate synthase subunit 1 (674 aa).

Low complexity predominate over residues 1–10 (MPSATSTNGA). Residues 1 to 26 (MPSATSTNGANGNGNGNGASASPAPG) are disordered. ATP-binding positions include 261–281 (LLRY…EVGG) and 312–338 (FKTE…KNKS). Residue glutamate 278 participates in Mg(2+) binding. The Tele-phosphohistidine intermediate role is filled by histidine 320. 339–349 (MREAGFYVPDT) lines the CoA pocket.

It belongs to the succinate/malate CoA ligase alpha subunit family. Composed of two subunits.

The protein resides in the cytoplasm. The enzyme catalyses oxaloacetate + acetyl-CoA + ADP + phosphate = citrate + ATP + CoA. Functionally, catalyzes the formation of cytosolic acetyl-CoA, which is mainly used for the biosynthesis of fatty acids and sterols. This is ATP-citrate synthase subunit 1 (ACL1) from Sordaria macrospora (strain ATCC MYA-333 / DSM 997 / K(L3346) / K-hell).